We begin with the raw amino-acid sequence, 279 residues long: Proto-oncogene FRAT1 (279 aa).

Disordered stretches follow at residues 1 to 24 (MPCR…EEDS) and 56 to 76 (AQHS…APGP). Residues 7–24 (EEEEAGEEAEGEEEEEDS) are compositionally biased toward acidic residues. The residue at position 88 (Ser88) is a Phosphoserine. 2 disordered regions span residues 136 to 200 (GPSA…DDPH) and 228 to 279 (RAKL…VPGS). The segment at 198–220 (DPHRLLQQLVLSGNLIKEAVRRL) is involved in GSK-3 binding. Phosphoserine is present on residues Ser249 and Ser252.

Belongs to the GSK-3-binding protein family. In terms of assembly, binds DVL1. Binds GSK-3 and prevent GSK-3-dependent phosphorylation. Phosphorylated.

The protein resides in the cytoplasm. Its function is as follows. Positively regulates the Wnt signaling pathway by stabilizing beta-catenin through the association with GSK-3. May play a role in tumor progression and collaborate with PIM1 and MYC in lymphomagenesis. This chain is Proto-oncogene FRAT1 (FRAT1), found in Homo sapiens (Human).